The chain runs to 1040 residues: Desmoglein-4 (1040 aa).

A signal peptide spans M1 to S23. A propeptide spanning residues E24–R49 is cleaved from the precursor. Cadherin domains follow at residues E50 to F157, T158 to L269, E270 to F385, and S389 to I497. Topologically, residues E50–A633 are extracellular. A glycan (N-linked (GlcNAc...) asparagine) is linked at N110. N545 carries N-linked (GlcNAc...) asparagine glycosylation. The chain crosses the membrane as a helical span at residues G634–M654. At C655–Q1040 the chain is on the cytoplasmic side. Desmoglein repeat repeat units follow at residues T883–E909 and T910–M940. The interval Q1015–Q1040 is disordered.

Interacts with JUP.

The protein resides in the cell membrane. It localises to the cell junction. The protein localises to the desmosome. In terms of biological role, a component of desmosome cell-cell junctions which are required for positive regulation of cellular adhesion. Coordinates the transition from proliferation to differentiation in hair follicle keratinocytes. Plays a role in moderating lymphocyte migration to inflamed skin and maintaining homeostasis of the epidermal inflammatory response. The protein is Desmoglein-4 (Dsg4) of Rattus norvegicus (Rat).